The primary structure comprises 306 residues: Methionyl-tRNA formyltransferase (306 aa).

110 to 113 (SLLP) lines the (6S)-5,6,7,8-tetrahydrofolate pocket.

It belongs to the Fmt family.

It catalyses the reaction L-methionyl-tRNA(fMet) + (6R)-10-formyltetrahydrofolate = N-formyl-L-methionyl-tRNA(fMet) + (6S)-5,6,7,8-tetrahydrofolate + H(+). Its function is as follows. Attaches a formyl group to the free amino group of methionyl-tRNA(fMet). The formyl group appears to play a dual role in the initiator identity of N-formylmethionyl-tRNA by promoting its recognition by IF2 and preventing the misappropriation of this tRNA by the elongation apparatus. This Brucella melitensis biotype 2 (strain ATCC 23457) protein is Methionyl-tRNA formyltransferase.